Reading from the N-terminus, the 256-residue chain is Probable ABC transporter ATP-binding protein spyM18_0273 (256 aa).

The region spanning 4–246 is the ABC transporter domain; sequence LEINNLHVSI…EKEGYAGIAQ (243 aa). 36-43 lines the ATP pocket; the sequence is GPNGTGKS.

It belongs to the ABC transporter superfamily. Ycf16 family.

Its subcellular location is the cell membrane. The sequence is that of Probable ABC transporter ATP-binding protein spyM18_0273 from Streptococcus pyogenes serotype M18 (strain MGAS8232).